The chain runs to 55 residues: Large ribosomal subunit protein bL32 (55 aa).

The protein belongs to the bacterial ribosomal protein bL32 family.

This chain is Large ribosomal subunit protein bL32, found in Aeromonas hydrophila subsp. hydrophila (strain ATCC 7966 / DSM 30187 / BCRC 13018 / CCUG 14551 / JCM 1027 / KCTC 2358 / NCIMB 9240 / NCTC 8049).